The chain runs to 307 residues: MSLRHFLTLSDFTKQELENLIKRASELRKMQHAGEIYQPFVGRTLGMIFEKSSTRTRISFETGMGQFGGNAIFLSPNDTQLGRGEPLEDSARVISSMVDIIMIRTFGHEKVETFAKYSSVPIINALTDEFHPCQLLADMQTYYEHRGSIENKIVTWVGDGNNMCASFMQAAHQFGFELRVAAPYGFEPDSALMERFSHCVSLVENVQDAAKDSNLIVTDVWASMGQESEQNTRARRFAPYQVTPSLLDKADPEVVFMHCLPAHRGEEISHDMLDDPRSVVWDEAENRLHAQKALMEFLLKDKIKLPA.

Residues 53–56 (STRT), glutamine 80, arginine 104, and 131–134 (HPCQ) contribute to the carbamoyl phosphate site. L-ornithine contacts are provided by residues asparagine 162, aspartate 219, and 223 to 224 (SM). Carbamoyl phosphate-binding positions include 259–260 (CL) and arginine 287.

It belongs to the aspartate/ornithine carbamoyltransferase superfamily. OTCase family.

It is found in the cytoplasm. It carries out the reaction carbamoyl phosphate + L-ornithine = L-citrulline + phosphate + H(+). It participates in amino-acid biosynthesis; L-arginine biosynthesis; L-arginine from L-ornithine and carbamoyl phosphate: step 1/3. Reversibly catalyzes the transfer of the carbamoyl group from carbamoyl phosphate (CP) to the N(epsilon) atom of ornithine (ORN) to produce L-citrulline. In Psychrobacter arcticus (strain DSM 17307 / VKM B-2377 / 273-4), this protein is Ornithine carbamoyltransferase.